A 1214-amino-acid polypeptide reads, in one-letter code: Spliceosome-associated protein 130 A (1214 aa).

The disordered stretch occupies residues 817 to 848 (AGGVGENGNGNADQMENGADDEDKEDPLSDEQ). Acidic residues predominate over residues 834-845 (GADDEDKEDPLS).

It belongs to the RSE1 family. As to quaternary structure, identified in the spliceosome C complex. Component of the U11/U12 snRNPs that are part of the U12-type spliceosome. Component of splicing factor SF3B complex. Expressed at low levels in roots, leaves, inflorescence and, to a lower extent, in siliques.

The protein resides in the nucleus. Subunit of the splicing factor SF3B required for 'A' complex assembly formed by the stable binding of U2 snRNP to the branchpoint sequence (BPS) in pre-mRNA. Sequence independent binding of SF3A/SF3B complex upstream of the branch site is essential, it may anchor U2 snRNP to the pre-mRNA. May also be involved in the assembly of the 'E' complex. Also belongs to the minor U12-dependent spliceosome, which is involved in the splicing of rare class of nuclear pre-mRNA intron. Required for pollen and ovule development, especially during the transition from microspore to the bicellular stage in pollen development. Involved in the accumulation of QRT1 and QRT3. This Arabidopsis thaliana (Mouse-ear cress) protein is Spliceosome-associated protein 130 A.